The chain runs to 222 residues: MHIMEGYLPMEWAIVWYIISAIVVGYGILNLNKVLKNNPEAKPLLAISGAFMFVLSSLKLPSVSGSCSHPTGNGLGAILFGPAITSVLATIVLLFQALVLAHGGISTLGANIFSMGIMGPFVGYLVFKALRGKLNITWVVMLTAIFADWATYLTTSIQLALAFPVPDFMSSFTEFGTIFAITQIPLAIAEGLITALLWDYLSELRPELFEKITNIKKGGNNE.

6 helical membrane passes run 8 to 28 (LPME…GYGI), 43 to 63 (PLLA…LPSV), 75 to 95 (LGAI…VLLF), 107 to 127 (TLGA…YLVF), 134 to 154 (LNIT…TYLT), and 178 to 198 (IFAI…ALLW).

It belongs to the CbiM family. As to quaternary structure, forms an energy-coupling factor (ECF) transporter complex composed of an ATP-binding protein (A component, CbiO), a transmembrane protein (T component, CbiQ) and 2 possible substrate-capture proteins (S components, CbiM and CbiN) of unknown stoichimetry.

The protein resides in the cell membrane. It functions in the pathway cofactor biosynthesis; adenosylcobalamin biosynthesis. Functionally, part of the energy-coupling factor (ECF) transporter complex CbiMNOQ involved in cobalt import. The protein is Putative cobalt transport protein CbiM of Methanococcus voltae (strain ATCC BAA-1334 / A3).